Here is a 138-residue protein sequence, read N- to C-terminus: Basic phospholipase A2 homolog 7 (138 aa).

Positions Met1 to Gly16 are cleaved as a signal peptide. Intrachain disulfides connect Cys42/Cys131, Cys44/Cys60, Cys59/Cys111, Cys65/Cys138, Cys66/Cys104, and Cys91/Cys102. Residues Lys121 to Lys133 form an important for membrane-damaging activities in eukaryotes and bacteria; heparin-binding region.

It belongs to the phospholipase A2 family. Group II subfamily. K49 sub-subfamily. In terms of tissue distribution, expressed by the venom gland.

It localises to the secreted. Functionally, snake venom phospholipase A2 homolog that lacks enzymatic activity. Is myotoxic and displays edema-inducing activities. A model of myotoxic mechanism has been proposed: an apo Lys49-PLA2 is activated by the entrance of a hydrophobic molecule (e.g. fatty acid) at the hydrophobic channel of the protein leading to a reorientation of a monomer. This reorientation causes a transition between 'inactive' to 'active' states, causing alignment of C-terminal and membrane-docking sites (MDoS) side-by-side and putting the membrane-disruption sites (MDiS) in the same plane, exposed to solvent and in a symmetric position for both monomers. The MDoS region stabilizes the toxin on membrane by the interaction of charged residues with phospholipid head groups. Subsequently, the MDiS region destabilizes the membrane with penetration of hydrophobic residues. This insertion causes a disorganization of the membrane, allowing an uncontrolled influx of ions (i.e. calcium and sodium), and eventually triggering irreversible intracellular alterations and cell death. The chain is Basic phospholipase A2 homolog 7 from Craspedocephalus gramineus (Bamboo pit viper).